The sequence spans 565 residues: MPAEIARRIAQGAGREPADLVIRGARLLDLVTGELVPTDIAVCGEVVVGTYGEYEGARVIEAASRIAVPGFIDTHLHIESSLITPHEFDRCVLPHGVTTAIWDPHELANVLGTAAFDYALQASTETAMDIRVQLSSCVPATDLESAGARIEAADLLPYRDHPRSLGIAEFMNFPGVVQADPGCLAKLAAFAGRHVDGHAPLLSGSGLNAYAAAGIRTDHEATGAAEALEKIRKGMTVLIREGSVSKDLAALAPLLTVATSPFLAFCTDDRNPLDIAEEGHLDHLIRTAIRLGVPPLAAYRAASLSAATAFGLTDRGMIAPGRRADIVLLDDLEACAVARVIAGGRAVEEALFAGRARTPAPGRGSVKAAPVAAEDFRIPGADGAETSVIGVVPGRIITEHRRLELPAANGCAGCDLDQDVVKVAVIARHGRPGMGRGFVQGFGLRRGAIASSVGHDSHNLCVVGADDADMAVAINRLIALQGGFVVAAGGTVLAELALPIAGLMSDLPFEAVRDALHPLREAARTLGCTLPEPFLQVAFLPLPVIPHLKITDRGLVDVDRMRLLG.

The protein belongs to the metallo-dependent hydrolases superfamily. Adenine deaminase family. Mn(2+) is required as a cofactor.

The catalysed reaction is adenine + H2O + H(+) = hypoxanthine + NH4(+). This is Adenine deaminase from Methylobacterium nodulans (strain LMG 21967 / CNCM I-2342 / ORS 2060).